The following is a 375-amino-acid chain: MSELDYYSLLEVERTADDKTIKTSYRRLAMRYHPDRNPGDSDAEERFKAISEAYDCLKDPQKRAAYDRYGKDAFQGGGGFGGFGGGAQDFGGFSDIFESVFGEFMGGRGQARSSVQRGADLRYDLKISLEEAFKGKTVDIEIDVASVCDACHGSGAKAGSGRKTCDTCHGSGRIRVQQGFFVVEQSCPVCQGKGEVISDPCPECHGEGRCEKHKTLSVNIPAGVDDGTRIRLSGEGEAGVHGGPAGDLYIFIHVTPHQVFQRESYNLFAHVPISFTKAALGGSIHVPSLDGEQYEISIPAGIQSGKQLKRRGAGMPVLNGRGRGDLIIQIDVETPTRLTAKQRELLEQFRETETGEECPKSSGFFSKLKTILTGE.

The J domain maps to 5-70 (DYYSLLEVER…QKRAAYDRYG (66 aa)). The CR-type zinc-finger motif lies at 135 to 213 (GKTVDIEIDV…CHGEGRCEKH (79 aa)). Residues C148, C151, C165, C168, C187, C190, C201, and C204 each contribute to the Zn(2+) site. CXXCXGXG motif repeat units lie at residues 148–155 (CDACHGSG), 165–172 (CDTCHGSG), 187–194 (CPVCQGKG), and 201–208 (CPECHGEG).

Belongs to the DnaJ family. Homodimer. Zn(2+) serves as cofactor.

Its subcellular location is the cytoplasm. Functionally, participates actively in the response to hyperosmotic and heat shock by preventing the aggregation of stress-denatured proteins and by disaggregating proteins, also in an autonomous, DnaK-independent fashion. Unfolded proteins bind initially to DnaJ; upon interaction with the DnaJ-bound protein, DnaK hydrolyzes its bound ATP, resulting in the formation of a stable complex. GrpE releases ADP from DnaK; ATP binding to DnaK triggers the release of the substrate protein, thus completing the reaction cycle. Several rounds of ATP-dependent interactions between DnaJ, DnaK and GrpE are required for fully efficient folding. Also involved, together with DnaK and GrpE, in the DNA replication of plasmids through activation of initiation proteins. The chain is Chaperone protein DnaJ from Zymomonas mobilis subsp. mobilis (strain ATCC 31821 / ZM4 / CP4).